The sequence spans 473 residues: GTPase Der (473 aa).

2 consecutive EngA-type G domains span residues 3–167 and 203–378; these read FTVA…GKDR and LRVA…RVWN. GTP is bound by residues 9–16, 56–60, 119–122, 209–216, 256–260, and 321–324; these read GRPNVGKS, DTAGL, NKSE, GRPNAGKS, DTAGM, and NKWD. The 85-residue stretch at 379 to 463 folds into the KH-like domain; sequence KRISTARLNR…PIRIHFRSAE (85 aa).

The protein belongs to the TRAFAC class TrmE-Era-EngA-EngB-Septin-like GTPase superfamily. EngA (Der) GTPase family. As to quaternary structure, associates with the 50S ribosomal subunit.

GTPase that plays an essential role in the late steps of ribosome biogenesis. The protein is GTPase Der of Rhizobium etli (strain CIAT 652).